A 494-amino-acid polypeptide reads, in one-letter code: Cytochrome P450 monooxygenase ccsD (494 aa).

The helical transmembrane segment at 5–25 threads the bilayer; the sequence is ISPRTLVLLAVTCSLLVLYFS. Cys-438 lines the heme pocket. N-linked (GlcNAc...) asparagine glycosylation is found at Asn-445 and Asn-477.

This sequence belongs to the cytochrome P450 family. The cofactor is heme.

The protein resides in the membrane. The protein operates within mycotoxin biosynthesis. Functionally, cytochrome P450 monooxygenase; part of the gene cluster that mediates the biosynthesis of a family of the mycotoxins cytochalasins E and K. The hybrid PKS-NRPS synthetase ccsA and the enoyl reductase ccsC are responsible for fusion of phenylalanine with an octaketide backbone and subsequent release of the stable tetramic acid precursor. The polyketide synthase module (PKS) of the PKS-NRPS ccsA is responsible for the synthesis of the octaketide backbone. The downstream nonribosomal peptide synthetase (NRPS) amidates the carboxyl end of the octaketide with a phenylalanine. A reductase-like domain (R) at the C-terminus catalyzes the reductive release of the polyketide-amino acid intermediate. Because ccsA lacks a designated enoylreductase (ER) domain, the required activity is provided the enoyl reductase ccsC. Upon formation of the 11-membered carbocycle-fused perhydroisoindolone intermediate, a number of oxidative steps are required to afford the final cytochalasin E and K, including two hydroxylations at C17 and C18, one alcohol oxidation at C17, one epoxidation at C6 and C7 and two Baeyer-Villiger oxidations. The oxidative modification at C17, C18 and the C6-C7 epoxidation are likely to be catalyzed by the two cytochrome P450 oxygenases ccsD and ccsG. CcsD may be responsible for the epoxidation of the C6-C7 double bond. CcsG may be responsible for the successive oxidative modifications at C17 and C18. The double Baeyer-Villiger oxidations of ketocytochalasin to precytochalasin and cytochalasin Z(16) are among the final steps leading to cytochalasin E and K and are catalyzed by ccsB. The first oxygen insertion step follows that of the classic BVMO mechanism, generating the ester precytochalasin. Release of precytochalasin into an aqueous environment can generate the shunt product iso-precytochalasin through spontaneous isomerization. Alternatively, precytochalasin can undergo further oxidation by ccsB to yield the in-line carbonate-containing cytochalasin Z(16). Cytochalasin Z(16) is a precursor to cytochalasin E and cytochalasin K, whereas iso-precytochalasin is a precursor to cytochalasin Z(17) and rosellichalasin. The hydrolyase ccsE may catalyze hydrolysis of epoxide bond in cytochalasin E to afford cytochalasin K. The function of ccsF has not been assigned but it may play a role in post-PKS-NRPS biosynthetic step, resistance or transport of cytochalasins and related PKS-NRPS products. This is Cytochrome P450 monooxygenase ccsD from Aspergillus clavatus (strain ATCC 1007 / CBS 513.65 / DSM 816 / NCTC 3887 / NRRL 1 / QM 1276 / 107).